The following is a 182-amino-acid chain: ADP-ribosylation factor-like protein 3 (182 aa).

A lipid anchor (N-myristoyl glycine) is attached at glycine 2. Serine 5 is subject to Phosphoserine. GTP contacts are provided by residues 24 to 31 (GLDNAGKT), threonine 48, 67 to 71 (DIGGQ), glycine 70, 126 to 129 (NKQD), and 159 to 161 (SAL). Threonine 31 and threonine 48 together coordinate Mg(2+).

The protein belongs to the small GTPase superfamily. Arf family. Found in a complex with ARL3, RP2 and UNC119 (or UNC119B); RP2 induces hydrolysis of GTP ARL3 in the complex, leading to the release of UNC119 (or UNC119B). Interacts with RP2; interaction is direct and stimulated with the activated GTP-bound form of ARL3. Interacts with SYS1. Interacts with ARL2BP; the GTP-bound form interacts with ARL2BP. Microtubule-associated protein. Does not interact with TBCC. Interacts with RP2. Interacts with PDE6D; the interaction occurs specifically with the GTP-bound form of ARL3. Interacts with GGA1; the interaction recruits PKD1:PKD2 complex to trans-Golgi network and is required for ciliary targeting of PKD1:PKD2 complex. Interacts with DNAAF9.

Its subcellular location is the golgi apparatus membrane. It is found in the cytoplasm. It localises to the cytoskeleton. The protein resides in the spindle. The protein localises to the nucleus. Its subcellular location is the microtubule organizing center. It is found in the centrosome. It localises to the cell projection. The protein resides in the cilium. Functionally, small GTP-binding protein which cycles between an inactive GDP-bound and an active GTP-bound form, and the rate of cycling is regulated by guanine nucleotide exchange factors (GEF) and GTPase-activating proteins (GAP). Required for normal cytokinesis and cilia signaling. Required for targeting proteins to the cilium, including myristoylated NPHP3 and prenylated INPP5E. Targets NPHP3 to the ciliary membrane by releasing myristoylated NPHP3 from UNC119B cargo adapter into the cilium. Requires assistance from GTPase-activating proteins (GAPs) like RP2 and PDE6D, in order to cycle between inactive GDP-bound and active GTP-bound forms. Required for PKD1:PKD2 complex targeting from the trans-Golgi network to the cilium. This chain is ADP-ribosylation factor-like protein 3, found in Mus musculus (Mouse).